Reading from the N-terminus, the 1275-residue chain is Myosin-1 (1275 aa).

The region spanning 35–727 is the Myosin motor domain; the sequence is VGVSDLTLLS…TLFAMEDMRD (693 aa). 128–135 is an ATP binding site; that stretch reads GESGAGKT. Position 361 is a phosphoserine (S361). Residues 410 to 493 form an actin-binding region; that stretch reads TIGILDIYGF…PGLFAALNDS (84 aa). IQ domains lie at 731 to 751 and 752 to 777; these read HNMA…KEDA and ARLI…YGNG. The region spanning 785–974 is the TH1 domain; sequence RRRMSMLGSR…KSGTVSVRPG (190 aa). Disordered regions lie at residues 966-1064, 1089-1128, 1183-1230, and 1251-1275; these read SGTV…LNNN, QNHN…AKPK, SECP…GGLS, and IADA…DDDW. A compositionally biased stretch (polar residues) spans 977–992; the sequence is PDSQNPKRPRATSSKV. Residues 1095 to 1106 are compositionally biased toward low complexity; that stretch reads PTAPSRPAKKAA. The span at 1107–1121 shows a compositional bias: pro residues; that stretch reads PAPPVKKTAPPPPPS. An SH3 domain is found at 1127–1187; that stretch reads PKWPTFKANY…PTAYISECPP (61 aa). Positions 1254–1263 are enriched in basic and acidic residues; it reads ALKKRSATRD. A compositionally biased stretch (acidic residues) spans 1264-1275; it reads SDDEEEDDDDDW.

This sequence belongs to the TRAFAC class myosin-kinesin ATPase superfamily. Myosin family. Phosphorylation of the TEDS site (Ser-361) is required for the polarization of the actin cytoskeleton. Phosphorylation probably activates the myosin-I ATPase activity.

It is found in the cytoplasm. The protein resides in the cytoskeleton. Its subcellular location is the actin patch. In terms of biological role, type-I myosin implicated in the organization of the actin cytoskeleton. Required for proper actin cytoskeleton polarization. At the cell cortex, assembles in patch-like structures together with proteins from the actin-polymerizing machinery and promotes actin assembly. Functions as actin nucleation-promoting factor (NPF) for the Arp2/3 complex. The sequence is that of Myosin-1 (MYO1) from Meyerozyma guilliermondii (strain ATCC 6260 / CBS 566 / DSM 6381 / JCM 1539 / NBRC 10279 / NRRL Y-324) (Yeast).